A 9702-amino-acid polypeptide reads, in one-letter code: Nonribosomal peptide synthetase ungA (9702 aa).

The tract at residues 248-647 is adenylation 1; sequence EQAQLRPHAP…ARKDTQVKIR (400 aa). The region spanning 775-852 is the Carrier 1 domain; that stretch reads APQTEMEYRL…MARAAQEKQT (78 aa). At Ser812 the chain carries O-(pantetheine 4'-phosphoryl)serine. The tract at residues 891-1288 is condensation 1; that stretch reads DILPCTPLQE…EAVLRHVCSQ (398 aa). Residues 1330 to 1730 form an adenylation 2 region; that stretch reads QRTQQQPDAP…GRKDTQVKIR (401 aa). The Carrier 2 domain maps to 1857–1933; the sequence is LPQSPMEKSL…RLARREIQTD (77 aa). Ser1894 is subject to O-(pantetheine 4'-phosphoryl)serine. The interval 1946–2374 is epimerization 1; the sequence is PFALSPIQQF…ERALEGTAVQ (429 aa). The segment at 2414 to 2842 is condensation 2; that stretch reads EDIYPCSPLQ…LDTAILSPQD (429 aa). Positions 2868 to 3267 are adenylation 3; it reads QVERQPDALA…GRKDTQVKIR (400 aa). Residues 3397–3473 form the Carrier 3 domain; the sequence is APTTEMERHL…EMSQVAKLGS (77 aa). The residue at position 3434 (Ser3434) is an O-(pantetheine 4'-phosphoryl)serine. Residues 3512-3920 are condensation 3; sequence EDVFPCTPLQ…LLCDASHHQS (409 aa). Residues 3957 to 4361 are adenylation 4; that stretch reads KQTQRRSAAQ…GRKDAQVKIR (405 aa). The 78-residue stretch at 4491 to 4568 folds into the Carrier 4 domain; that stretch reads PPTTDLERQI…LALSVSAAVD (78 aa). Ser4528 is modified (O-(pantetheine 4'-phosphoryl)serine). An epimerization 2 region spans residues 4583–5013; sequence ALSPIQQMFA…QAAAQALPLL (431 aa). The condensation 4 stretch occupies residues 5049–5474; that stretch reads VEDIYPCSPL…ANIISHQDLE (426 aa). An adenylation 5 region spans residues 5496–5899; it reads MQQAESQPGA…GRKDNQVKIH (404 aa). A Carrier 5 domain is found at 6033–6110; the sequence is TASSPEELEL…LVSHAQGNTA (78 aa). Ser6070 carries the O-(pantetheine 4'-phosphoryl)serine modification. Residues 6127-6551 form an epimerization 3 region; the sequence is ELSPIQQLFF…CKSSLEAAAA (425 aa). The interval 6593 to 6935 is condensation 5; the sequence is VEDIYPCAPI…TGISVQGGAA (343 aa). The adenylation 6 stretch occupies residues 7047 to 7447; sequence KRPDAPAIDA…GRRDNQVKVR (401 aa). Positions 7575–7655 constitute a Carrier 6 domain; it reads GPQTEVERLL…RSARTVQGHV (81 aa). Ser7613 carries the post-translational modification O-(pantetheine 4'-phosphoryl)serine. Residues 7670–8106 are epimerization 4; it reads DLAPVQQMFA…LVTASELLMQ (437 aa). A condensation 6 region spans residues 8144–8588; the sequence is VEDIYPCSPI…EVDLSTDHDQ (445 aa). The tract at residues 8612–9025 is adenylation 7; that stretch reads NTVQKQPHST…GRKDSQVKIR (414 aa). The Carrier 7 domain maps to 9158–9236; sequence SPTAPMERRL…LALLVREGDA (79 aa). Ser9196 bears the O-(pantetheine 4'-phosphoryl)serine mark. The tract at residues 9282 to 9629 is condensation 7; sequence DVYPTTDLQN…DNLEHDPGTA (348 aa).

It belongs to the NRP synthetase family.

It participates in secondary metabolite biosynthesis. Its function is as follows. Nonribosomal peptide synthetase; part of the gene cluster that mediates the biosynthesis of the unguisins, gamma-aminobutyric acid (GABA)-containing fungal cyclic heptapeptides with the amino acid sequence cyclo-(D-Ala1-D-Val2-L-Phe3-D-Val4-D-Ala5-D-Trp6-GABA7) for unguisin A and cyclo-(D-Ala1-D-Val2-L-Leu3-D-Val4-D-Ala5-D-Trp6-GABA7) for unguisin B. UngA is the main enzyme within the cluster which condenses the 7 residues using its respective 7 modules. The terminal condensation domain (Ct) is involved in cyclization with D-alanine and thereby releasing of unguisins A and B. The alanine racemase ungC provides D-alanine, which is then accepted by the first adenylation domain of ungA. Finally, the hydrolase ungD catalyzes the hydrolysis between the D-tryptophan and GABA residues of unguisins A and B to produce the corresponding linear peptides. The protein is Nonribosomal peptide synthetase ungA of Aspergillus violaceofuscus (strain CBS 115571).